Reading from the N-terminus, the 217-residue chain is Small ribosomal subunit protein uS3 (217 aa).

Residues 38–106 (VRKYIETALK…RVHINIIEIK (69 aa)) form the KH type-2 domain.

Belongs to the universal ribosomal protein uS3 family. As to quaternary structure, part of the 30S ribosomal subunit. Forms a tight complex with proteins S10 and S14.

In terms of biological role, binds the lower part of the 30S subunit head. Binds mRNA in the 70S ribosome, positioning it for translation. This Lysinibacillus sphaericus (strain C3-41) protein is Small ribosomal subunit protein uS3.